The chain runs to 509 residues: Zinc metalloproteinase aureolysin (509 aa).

The first 27 residues, 1-27 (MRKFSRYAFTSMATVTLLSSLTPAALA), serve as a signal peptide directing secretion. A propeptide spanning residues 28-208 (SDTNHKPATS…VVEKTNLVKE (181 aa)) is cleaved from the precursor. D348 contributes to the Ca(2+) binding site. H352 serves as a coordination point for Zn(2+). E353 is a catalytic residue. Zn(2+) is bound by residues H356 and E376. Residues D387, E389, D390, L392, E395, Y398, T399, K402, and D405 each coordinate Ca(2+). The active-site Proton donor is H436.

This sequence belongs to the peptidase M4 family. In terms of assembly, monomer. It depends on Ca(2+) as a cofactor. Zn(2+) is required as a cofactor.

The catalysed reaction is Cleavage of insulin B chain with specificity similar to that of thermolysin, preferring hydrophobic P1' residues. Activates the glutamyl endopeptidase (EC 3.4.21.19) of Staphylococcus aureus.. Functionally, plays an essential role in immune evasion by helping bacteria to resist complement-mediated killing by neutrophils. Inhibits the deposition of host C3b on bacterial surfaces and the release of the chemoattractant C5a by cleaving the central complement protein C3. The cleavage site renders the C3b molecule vulnerable to proteolytic degradation by host regulators. Cleaves and inactivates host SERPINA1, which is an endogenous protease inhibitor essential for controlling neutrophil serine protease elastase. Also plays an essential role in the cleavage and subsequent activation of the serine protease SspA (glutamyl endopeptidase) which is involved in colonization and infection of human tissues. The sequence is that of Zinc metalloproteinase aureolysin from Staphylococcus aureus.